The primary structure comprises 299 residues: Oxygen-dependent coproporphyrinogen-III oxidase (299 aa).

Ser92 is a substrate binding site. The a divalent metal cation site is built by His96 and His106. The active-site Proton donor is the His106. 108 to 110 serves as a coordination point for substrate; it reads NVR. 2 residues coordinate a divalent metal cation: His145 and His175. Residues 240–275 are important for dimerization; the sequence is YVEFNLVWDRGTLFGLQTGGRTESILMSMPPLVRWE. Position 258-260 (258-260) interacts with substrate; sequence GGR.

This sequence belongs to the aerobic coproporphyrinogen-III oxidase family. As to quaternary structure, homodimer. The cofactor is a divalent metal cation.

It localises to the cytoplasm. The catalysed reaction is coproporphyrinogen III + O2 + 2 H(+) = protoporphyrinogen IX + 2 CO2 + 2 H2O. It participates in porphyrin-containing compound metabolism; protoporphyrin-IX biosynthesis; protoporphyrinogen-IX from coproporphyrinogen-III (O2 route): step 1/1. Involved in the heme biosynthesis. Catalyzes the aerobic oxidative decarboxylation of propionate groups of rings A and B of coproporphyrinogen-III to yield the vinyl groups in protoporphyrinogen-IX. This chain is Oxygen-dependent coproporphyrinogen-III oxidase, found in Salmonella typhi.